The primary structure comprises 106 residues: Large ribosomal subunit protein uL24 (106 aa).

It belongs to the universal ribosomal protein uL24 family. In terms of assembly, part of the 50S ribosomal subunit.

Functionally, one of two assembly initiator proteins, it binds directly to the 5'-end of the 23S rRNA, where it nucleates assembly of the 50S subunit. In terms of biological role, one of the proteins that surrounds the polypeptide exit tunnel on the outside of the subunit. The polypeptide is Large ribosomal subunit protein uL24 (Bordetella petrii (strain ATCC BAA-461 / DSM 12804 / CCUG 43448)).